Here is a 156-residue protein sequence, read N- to C-terminus: ATP synthase subunit b (156 aa).

The chain crosses the membrane as a helical span at residues 5 to 25; the sequence is LTLIVQMLVFAAFVLFTMKLV.

It belongs to the ATPase B chain family. As to quaternary structure, F-type ATPases have 2 components, F(1) - the catalytic core - and F(0) - the membrane proton channel. F(1) has five subunits: alpha(3), beta(3), gamma(1), delta(1), epsilon(1). F(0) has three main subunits: a(1), b(2) and c(10-14). The alpha and beta chains form an alternating ring which encloses part of the gamma chain. F(1) is attached to F(0) by a central stalk formed by the gamma and epsilon chains, while a peripheral stalk is formed by the delta and b chains.

It localises to the cell inner membrane. Functionally, f(1)F(0) ATP synthase produces ATP from ADP in the presence of a proton or sodium gradient. F-type ATPases consist of two structural domains, F(1) containing the extramembraneous catalytic core and F(0) containing the membrane proton channel, linked together by a central stalk and a peripheral stalk. During catalysis, ATP synthesis in the catalytic domain of F(1) is coupled via a rotary mechanism of the central stalk subunits to proton translocation. Component of the F(0) channel, it forms part of the peripheral stalk, linking F(1) to F(0). This is ATP synthase subunit b from Legionella pneumophila (strain Paris).